A 233-amino-acid polypeptide reads, in one-letter code: uncharacterized protein (233 aa).

7 residues coordinate Zn(2+): His-64, His-66, Asp-68, His-69, His-143, Asp-162, and His-212.

The protein belongs to the metallo-beta-lactamase superfamily. Glyoxalase II family. Requires Zn(2+) as cofactor.

This is an uncharacterized protein from Bacillus subtilis (strain 168).